The following is a 21-amino-acid chain: DQPGDVKTHKQYDVNYLFFKI.

It belongs to the tyrosinase family. Hemocyanin subfamily. Hemolymph.

It is found in the secreted. Its subcellular location is the extracellular space. In terms of biological role, hemocyanins are copper-containing oxygen carriers occurring freely dissolved in the hemolymph of many mollusks and arthropods. This is Hemocyanin subunit 1 from Maja squinado (Mediterranean spider crab).